Here is a 97-residue protein sequence, read N- to C-terminus: Down syndrome critical region protein 8 (97 aa).

Expressed in numerous tissues; not found in breast, heart, small intestine and liver. Isoform 1: Predominantly expressed in the testis. Isoform 3: Predominantly expressed in the testis, at lower level in the placenta, during malignant progression of melanocytic tumors and in several tumors of varying origins. Isoform 4: Predominantly expressed in the testis, at lower level in the placenta, during malignant progression of melanocytic tumors and in several tumors of varying origins. Isoform 5: Predominantly expressed in the testis. Isoform 6: Predominantly expressed in the testis.

The sequence is that of Down syndrome critical region protein 8 from Homo sapiens (Human).